We begin with the raw amino-acid sequence, 214 residues long: Orotate phosphoribosyltransferase (214 aa).

K26 contacts 5-phospho-alpha-D-ribose 1-diphosphate. 34 to 35 contributes to the orotate binding site; that stretch reads FF. Residues 72–73, R99, K100, K103, H105, and 124–132 contribute to the 5-phospho-alpha-D-ribose 1-diphosphate site; these read YK and DDVITAGTA. Residues T128 and R157 each coordinate orotate.

Belongs to the purine/pyrimidine phosphoribosyltransferase family. PyrE subfamily. In terms of assembly, homodimer. The cofactor is Mg(2+).

The enzyme catalyses orotidine 5'-phosphate + diphosphate = orotate + 5-phospho-alpha-D-ribose 1-diphosphate. The protein operates within pyrimidine metabolism; UMP biosynthesis via de novo pathway; UMP from orotate: step 1/2. In terms of biological role, catalyzes the transfer of a ribosyl phosphate group from 5-phosphoribose 1-diphosphate to orotate, leading to the formation of orotidine monophosphate (OMP). The protein is Orotate phosphoribosyltransferase of Pseudomonas fluorescens (strain Pf0-1).